A 247-amino-acid polypeptide reads, in one-letter code: Segregation and condensation protein A (247 aa).

This sequence belongs to the ScpA family. In terms of assembly, component of a cohesin-like complex composed of ScpA, ScpB and the Smc homodimer, in which ScpA and ScpB bind to the head domain of Smc. The presence of the three proteins is required for the association of the complex with DNA.

The protein resides in the cytoplasm. Participates in chromosomal partition during cell division. May act via the formation of a condensin-like complex containing Smc and ScpB that pull DNA away from mid-cell into both cell halves. The chain is Segregation and condensation protein A from Caldanaerobacter subterraneus subsp. tengcongensis (strain DSM 15242 / JCM 11007 / NBRC 100824 / MB4) (Thermoanaerobacter tengcongensis).